The following is a 331-amino-acid chain: Photosystem II assembly lipoprotein Ycf48 (331 aa).

The first 23 residues, 1–23 (MIPVIRSFLSLLLCVGLTFGLGG), serve as a signal peptide directing secretion. Cysteine 24 carries N-palmitoyl cysteine lipidation. Cysteine 24 is lipidated: S-diacylglycerol cysteine.

The protein belongs to the Ycf48 family. Part of early PSII assembly complexes which includes D1 (psbA) and PsbI; not found in mature PSII. Binds to the lumenal side of PSII complexes. Interacts with YidC.

The protein resides in the cellular thylakoid membrane. Functionally, a factor required for optimal assembly of photosystem II (PSII), acting in the early stages of PSII assembly. Also plays a role in replacement of photodamaged D1 (psbA). Assists YidC in synthesis of chlorophyll-binding proteins. The sequence is that of Photosystem II assembly lipoprotein Ycf48 from Synechococcus sp. (strain RCC307).